The following is a 1089-amino-acid chain: Ankyrin repeat and IBR domain-containing protein 1 (1089 aa).

The N-myristoyl glycine moiety is linked to residue glycine 2. 2 ANK repeats span residues 45 to 74 and 144 to 173; these read QHNT…NPNK and KKNT…DLFA. The tract at residues 281–321 is disordered; it reads CQRSGVQMPTPPPSGYNAWDTLPSPRTPRTTRSSVTSPDEI. The span at 303–318 shows a compositional bias: low complexity; it reads PSPRTPRTTRSSVTSP. The TRIAD supradomain stretch occupies residues 329-569; the sequence is DTSLCDICMC…GGYYRCTRYE (241 aa). Cysteine 333, cysteine 336, cysteine 351, histidine 353, cysteine 356, cysteine 359, cysteine 378, cysteine 383, cysteine 465, cysteine 468, histidine 473, cysteine 478, cysteine 519, and cysteine 522 together coordinate Zn(2+). The segment at 333–383 adopts an RING-type 1 zinc-finger fold; that stretch reads CDICMCSISVFEDPVDMPCGHDFCRGCWESFLNLKIQEGEAHNIFCPAYDC. The segment at 401-478 adopts an IBR-type zinc-finger fold; sequence DKRYLQFDIK…LGEAHEPCDC (78 aa). The RING-type 2; atypical zinc finger occupies 519 to 548; the sequence is CANCKSPIQKNEGCNHMQCAKCKYDFCWIC. Residue cysteine 532 is part of the active site. Residues cysteine 537, cysteine 540, cysteine 545, cysteine 548, histidine 555, and cysteine 565 each contribute to the Zn(2+) site. Residues 575–640 adopt a coiled-coil conformation; it reads EEQSKEMTVE…RALKETEGGC (66 aa). Serine 737 is subject to Phosphoserine. Residues 776–821 are disordered; sequence RRGDVHSLLSNPPDPDEPSESTLDIPEGGSSSRRPGTSVVSSASMS. A UIM domain is found at 851 to 870; that stretch reads EDDPNILLAIQLSLQESGLA. Phosphoserine is present on residues serine 884 and serine 911. Disordered regions lie at residues 889–912, 927–964, and 1026–1089; these read GTSL…ALSS, AEND…QDPN, and DASV…VHLV. Polar residues-rich tracts occupy residues 931 to 941 and 1070 to 1082; these read PFSTDTLSSHP and DVSS…SSDW.

This sequence belongs to the RBR family.

The enzyme catalyses [E2 ubiquitin-conjugating enzyme]-S-ubiquitinyl-L-cysteine + [acceptor protein]-L-lysine = [E2 ubiquitin-conjugating enzyme]-L-cysteine + [acceptor protein]-N(6)-ubiquitinyl-L-lysine.. Functionally, might act as an E3 ubiquitin-protein ligase, or as part of E3 complex, which accepts ubiquitin from specific E2 ubiquitin-conjugating enzymes and then transfers it to substrates. The chain is Ankyrin repeat and IBR domain-containing protein 1 (ANKIB1) from Homo sapiens (Human).